The following is a 625-amino-acid chain: Enolase 4 (625 aa).

The disordered stretch occupies residues 184 to 226 (YSTVPTPLPPVPPPPPPPPPTKKKGQKPGRKDTITEKPIAPAE). Residues 189–203 (TPLPPVPPPPPPPPP) are compositionally biased toward pro residues. V300 is a substrate binding site. The disordered stretch occupies residues 331–350 (PSPPKAETKKGHDGSKRGQQ). Residues 336–346 (AETKKGHDGSK) show a composition bias toward basic and acidic residues. The active-site Proton acceptor is the N497. G548 provides a ligand contact to substrate. The tract at residues 604 to 625 (PLVPTFPTQGVEESAETGASSG) is disordered.

It belongs to the enolase family. As to quaternary structure, interacts with ENO1 and AKAP4. Post-translationally, synthesized as an approximately 70-kDa precursor, which then undergoes proteolytic cleavage to an approximately 60-kDa enzyme; HOATZ associates directly or indirectly with ENO4 to mediate this process before its transport to mature flagella.

The catalysed reaction is (2R)-2-phosphoglycerate = phosphoenolpyruvate + H2O. Its pathway is carbohydrate degradation; glycolysis; pyruvate from D-glyceraldehyde 3-phosphate: step 4/5. May be required for sperm motility and function. This is Enolase 4 from Homo sapiens (Human).